Reading from the N-terminus, the 1080-residue chain is Myocardin-related transcription factor B (1080 aa).

The RPEL 1 repeat unit spans residues 40-65 (EVLQLRLQQRRTREQLVDQGIMPPLK). Position 66 is a phosphoserine (serine 66). RPEL repeat units follow at residues 84 to 109 (NFLK…EETF) and 128 to 153 (DDLN…PVDS). Disordered regions lie at residues 170 to 222 (THGE…AQFT), 234 to 311 (TPLT…EPQM), 352 to 384 (PIKT…SSLD), and 477 to 501 (PHVE…LSTD). Composition is skewed to polar residues over residues 188–200 (QPAS…SAAS) and 240–259 (QPPT…SSAK). The segment covering 272–287 (NPNDKHRSKKCKDPKP) has biased composition (basic and acidic residues). Residues 358–370 (NSSSGSNSGSSSS) are compositionally biased toward low complexity. Residues 383–417 (LDDLKVSELKTELKLRGLPVSGTKPDLIERLKPYQ) form the SAP domain. 3 positions are modified to phosphoserine: serine 531, serine 535, and serine 537. A coiled-coil region spans residues 539–594 (SSSTLSTLELDAAEKDRKLQEKEKQIEELKRKLEQEQKLVEVLKMQLEVEKRGQQR). Positions 557–585 (LQEKEKQIEELKRKLEQEQKLVEVLKMQL) are required for interaction with itself and with MRTFA. Disordered regions lie at residues 588-646 (EKRG…SVGQ) and 794-846 (LQYQ…PQQF). Pro residues predominate over residues 595–606 (PPDPQPSDPPHP). Lysine 622 is covalently cross-linked (Glycyl lysine isopeptide (Lys-Gly) (interchain with G-Cter in SUMO1)). Residues 794–821 (LQYQRQPGPTNQQPFVSKTSNPALQSRT) are compositionally biased toward polar residues. Serine 913 is subject to Phosphoserine. The segment at 969 to 988 (GTLPSATDTGPLQNSSEDRE) is disordered. The segment covering 972–983 (PSATDTGPLQNS) has biased composition (polar residues).

As to quaternary structure, interacts with MRTFA and SRF. In terms of processing, O-glycosylated. As to expression, widely expressed. High expression in heart, brain and testis. Lower expression in lung, liver and kidney.

It localises to the nucleus. In terms of biological role, acts as a transcriptional coactivator of serum response factor (SRF). Required for skeletal myogenic differentiation. The protein is Myocardin-related transcription factor B (Mrtfb) of Mus musculus (Mouse).